Consider the following 59-residue polypeptide: Alpha-like toxin CsEv5 (59 aa).

The 59-residue stretch at 1–59 (KDGYPVDSKGCKLSCVANNYCDNQCKMKKASGGHCYAMSCYCEGLPENAKVSDSATNIC) folds into the LCN-type CS-alpha/beta domain. Intrachain disulfides connect Cys-11–Cys-59, Cys-15–Cys-35, Cys-21–Cys-40, and Cys-25–Cys-42.

This sequence belongs to the long (4 C-C) scorpion toxin superfamily. Sodium channel inhibitor family. As to expression, expressed by the venom gland.

It localises to the secreted. Binds voltage-independently sodium channels (Nav) and inhibits the inactivation of the activated channels, thereby blocking neuronal transmission. Is highly toxic to insects and barely toxic to mammals. As it does not compete with the classical alpha-toxin AaH2, this toxin is considered as an alpha-like toxin. The sequence is that of Alpha-like toxin CsEv5 from Centruroides sculpturatus (Arizona bark scorpion).